Consider the following 352-residue polypeptide: Phenylalanine--tRNA ligase alpha subunit (352 aa).

Mg(2+) is bound at residue glutamate 258.

It belongs to the class-II aminoacyl-tRNA synthetase family. Phe-tRNA synthetase alpha subunit type 1 subfamily. Tetramer of two alpha and two beta subunits. It depends on Mg(2+) as a cofactor.

The protein localises to the cytoplasm. The enzyme catalyses tRNA(Phe) + L-phenylalanine + ATP = L-phenylalanyl-tRNA(Phe) + AMP + diphosphate + H(+). This is Phenylalanine--tRNA ligase alpha subunit from Staphylococcus epidermidis (strain ATCC 35984 / DSM 28319 / BCRC 17069 / CCUG 31568 / BM 3577 / RP62A).